The chain runs to 244 residues: Putative ABC transporter ATP-binding protein gll0289 (244 aa).

One can recognise an ABC transporter domain in the interval 5–237 (LVVEELHYSY…RVLLETHGLE (233 aa)). 38–45 (GPNGSGKS) provides a ligand contact to ATP.

Belongs to the ABC transporter superfamily.

Its subcellular location is the cell inner membrane. Probably part of an ABC transporter complex. Responsible for energy coupling to the transport system. This chain is Putative ABC transporter ATP-binding protein gll0289, found in Gloeobacter violaceus (strain ATCC 29082 / PCC 7421).